We begin with the raw amino-acid sequence, 217 residues long: Superoxide dismutase [Mn], mitochondrial (217 aa).

The N-terminal 17 residues, 1-17 (MFVARKISPNCKPGVRG), are a transit peptide targeting the mitochondrion. 4 residues coordinate Mn(2+): histidine 43, histidine 91, aspartate 175, and histidine 179.

It belongs to the iron/manganese superoxide dismutase family. Homotetramer. Requires Mn(2+) as cofactor.

It is found in the mitochondrion matrix. It catalyses the reaction 2 superoxide + 2 H(+) = H2O2 + O2. Destroys superoxide anion radicals which are normally produced within the cells and which are toxic to biological systems. This is Superoxide dismutase [Mn], mitochondrial (Sod2) from Drosophila melanogaster (Fruit fly).